The sequence spans 99 residues: MAEGNTLISVDYEIFGKVQGVFFRKHTQAEGKKLGLVGWVQNTDRGTVQGQLQGPISKVRHMQEWLETRGSPKSHIDKANFNNEKVILKLDYSDFQIVK.

N-acetylalanine is present on alanine 2. Positions 9 to 99 (SVDYEIFGKV…LDYSDFQIVK (91 aa)) constitute an Acylphosphatase-like domain. Active-site residues include arginine 24 and asparagine 42.

It belongs to the acylphosphatase family. Organ-common type isozyme is found in many different tissues.

The catalysed reaction is an acyl phosphate + H2O = a carboxylate + phosphate + H(+). This is Acylphosphatase-1 (ACYP1) from Homo sapiens (Human).